A 200-amino-acid chain; its full sequence is Cytochrome c biogenesis ATP-binding export protein CcmA (200 aa).

The ABC transporter domain occupies 3–200 (LSGRGLRCVR…AREMRIGAAA (198 aa)). 35–42 (GHNGAGKT) contributes to the ATP binding site.

The protein belongs to the ABC transporter superfamily. CcmA exporter (TC 3.A.1.107) family. In terms of assembly, the complex is composed of two ATP-binding proteins (CcmA) and two transmembrane proteins (CcmB).

It localises to the cell inner membrane. The catalysed reaction is heme b(in) + ATP + H2O = heme b(out) + ADP + phosphate + H(+). In terms of biological role, part of the ABC transporter complex CcmAB involved in the biogenesis of c-type cytochromes; once thought to export heme, this seems not to be the case, but its exact role is uncertain. Responsible for energy coupling to the transport system. The sequence is that of Cytochrome c biogenesis ATP-binding export protein CcmA from Rhodopseudomonas palustris (strain BisB5).